The sequence spans 95 residues: uncharacterized protein (95 aa).

The next 3 membrane-spanning stretches (helical) occupy residues 3–23 (YTVL…GFSF), 35–55 (ILFL…MMLT), and 63–83 (MLGV…VMII).

The protein resides in the cell membrane. This is an uncharacterized protein from Mycoplasma pneumoniae (strain ATCC 29342 / M129 / Subtype 1) (Mycoplasmoides pneumoniae).